A 308-amino-acid chain; its full sequence is Autophagy-related protein 3 (308 aa).

The flexible region stretch occupies residues 83–159 (NFVETQTTET…NELADDDDDI (77 aa)). The tract at residues 89–121 (TTETRDVGDGWELEGQSEGERESGREDTKSNEE) is disordered. The span at 106–120 (EGERESGREDTKSNE) shows a compositional bias: basic and acidic residues. Cys235 (glycyl thioester intermediate) is an active-site residue. Residues 239–283 (NVMKVLMEKVRASRHRARDTEAQKNAEEDWEDLQSDIDDGLRVDQ) are handle region.

It belongs to the ATG3 family. As to quaternary structure, monomer. Interacts with ATG8 through an intermediate thioester bond between Cys-235 and the C-terminal Gly of ATG8. Interacts with the C-terminal region of the E1-like ATG7 enzyme. Also interacts with the ATG12-ATG5 conjugate.

It localises to the cytoplasm. Functionally, E2 conjugating enzyme required for the cytoplasm to vacuole transport (Cvt) and autophagy. Required for selective autophagic degradation of the nucleus (nucleophagy) as well as for mitophagy which contributes to regulate mitochondrial quantity and quality by eliminating the mitochondria to a basal level to fulfill cellular energy requirements and preventing excess ROS production. Responsible for the E2-like covalent binding of phosphatidylethanolamine to the C-terminal Gly of ATG8. The ATG12-ATG5 conjugate plays a role of an E3 and promotes the transfer of ATG8 from ATG3 to phosphatidylethanolamine (PE). This step is required for the membrane association of ATG8. The formation of the ATG8-phosphatidylethanolamine conjugate is essential for autophagy and for the cytoplasm to vacuole transport (Cvt). The ATG8-PE conjugate mediates tethering between adjacent membranes and stimulates membrane hemifusion, leading to expansion of the autophagosomal membrane during autophagy. The chain is Autophagy-related protein 3 from Kluyveromyces marxianus (strain DMKU3-1042 / BCC 29191 / NBRC 104275) (Yeast).